The primary structure comprises 103 residues: N(4)-acetylcytidine amidohydrolase (103 aa).

One can recognise an ASCH domain in the interval 6-101; sequence ITFSQRFQDD…QTQFYVIEFK (96 aa). The Proton acceptor role is filled by Lys21. Thr24 functions as the Nucleophile in the catalytic mechanism. Glu74 serves as the catalytic Proton donor.

This sequence belongs to the N(4)-acetylcytidine amidohydrolase family.

The enzyme catalyses N(4)-acetylcytidine + H2O = cytidine + acetate + H(+). It carries out the reaction N(4)-acetyl-2'-deoxycytidine + H2O = 2'-deoxycytidine + acetate + H(+). The catalysed reaction is N(4)-acetylcytosine + H2O = cytosine + acetate + H(+). In terms of biological role, catalyzes the hydrolysis of N(4)-acetylcytidine (ac4C). This is N(4)-acetylcytidine amidohydrolase (yqfB) from Shigella boydii serotype 4 (strain Sb227).